The following is a 99-amino-acid chain: Plastocyanin (99 aa).

The Plastocyanin-like domain occupies 1–99 (IEVLLGGDDG…AGMVGKVTVN (99 aa)). Cu cation-binding residues include H37, C84, H87, and M92.

This sequence belongs to the plastocyanin family. Requires Cu(2+) as cofactor.

The protein resides in the plastid. The protein localises to the chloroplast thylakoid membrane. Its function is as follows. Participates in electron transfer between P700 and the cytochrome b6-f complex in photosystem I. The polypeptide is Plastocyanin (PETE) (Cucurbita pepo (Vegetable marrow)).